Reading from the N-terminus, the 431-residue chain is 3-phosphoshikimate 1-carboxyvinyltransferase (431 aa).

Residues Lys21, Ser22, and Arg26 each coordinate 3-phosphoshikimate. Residue Lys21 participates in phosphoenolpyruvate binding. Gly93 and Arg121 together coordinate phosphoenolpyruvate. 4 residues coordinate 3-phosphoshikimate: Ser166, Gln168, Asp318, and Lys345. Residue Gln168 coordinates phosphoenolpyruvate. Asp318 (proton acceptor) is an active-site residue. Arg349 and Arg391 together coordinate phosphoenolpyruvate.

It belongs to the EPSP synthase family. In terms of assembly, monomer.

Its subcellular location is the cytoplasm. It catalyses the reaction 3-phosphoshikimate + phosphoenolpyruvate = 5-O-(1-carboxyvinyl)-3-phosphoshikimate + phosphate. Its pathway is metabolic intermediate biosynthesis; chorismate biosynthesis; chorismate from D-erythrose 4-phosphate and phosphoenolpyruvate: step 6/7. Functionally, catalyzes the transfer of the enolpyruvyl moiety of phosphoenolpyruvate (PEP) to the 5-hydroxyl of shikimate-3-phosphate (S3P) to produce enolpyruvyl shikimate-3-phosphate and inorganic phosphate. The polypeptide is 3-phosphoshikimate 1-carboxyvinyltransferase (Sulfurihydrogenibium sp. (strain YO3AOP1)).